The sequence spans 168 residues: Ribulose bisphosphate carboxylase small subunit, chloroplastic (168 aa).

A chloroplast-targeting transit peptide spans M1 to R28.

This sequence belongs to the RuBisCO small chain family. Heterohexadecamer of 8 large and 8 small subunits.

Its subcellular location is the plastid. The protein resides in the chloroplast. RuBisCO catalyzes two reactions: the carboxylation of D-ribulose 1,5-bisphosphate, the primary event in carbon dioxide fixation, as well as the oxidative fragmentation of the pentose substrate. Both reactions occur simultaneously and in competition at the same active site. Although the small subunit is not catalytic it is essential for maximal activity. In Chlamydomonas moewusii (Chlamydomonas eugametos), this protein is Ribulose bisphosphate carboxylase small subunit, chloroplastic.